Reading from the N-terminus, the 803-residue chain is MSLLHIAVILPLIFALIIPILYRFFKKIHLGWFVLPIPVVLFIYFLSLISTTQSGNTVIKTLNWMPHIGMNFDLYLDGLSILFSLLITGIGSLVVLYSIGYLSKSEQLGNFYCYLLLFMGAMLGVVLSDNLIILYLFWELTSFSSFLLISFWREKKASIYGAQKSLIITVFGGLSLLGGFILISLAGDSLSLHELIANASEIQHSPLFIFAMVLIMLGAFTKSAQVPFYIWLPDAMEAPTPVSAYLHSATMVKAGLYLVARVTPLFAISQGWIWTITLVGLITLFWASLNATKQQDLKGILAFSTVSQLGMIMSMLGIGAVSYHFEGSQSQLYIAGFTAAVFHLVNHATFKGALFMITGAVDHVTGTRDVKKLGGLLTIMPISFTITVITALSMAGIPPFNGFLSKEKFLEAMIEISHANVFSLDTLGIVFPILAIVGSIFTFVYSIKFIMYIFFGKHQPNALPKKAHEASILMLLSPIILAVLVVVFGLFPGLLTQSIVEPATTAISGMSNVNAEFHLFHGITPAFISTLIIWILGILLLLTFSYWIRLLHAQPTRLTLNHWYDSTGKYLPNYSANMTNSYVNGYVRDSLVIIFGMLIVVTIVTLLSVPFDFNFKDINNIHIYEIAILILLIIAAFMVVIAKSRLFSVIMLGVVGYSVSVLFVFFKAPDLALTQFVVESISTALFLLCFYHLPNLNRYNETRSFKLTNALISIGVGLVVIILGLIAYGNRHFTSIGEYYKAHVYDLAHGKNMVNVILVDFRGMDTLFESSVLGIAGLGVYTMIKLRRKHQSSEVKSDEQAEQ.

A run of 19 helical transmembrane segments spans residues methionine 1–leucine 21, leucine 30–serine 50, leucine 79–isoleucine 99, leucine 117–phenylalanine 137, leucine 166–alanine 186, phenylalanine 208–phenylalanine 228, leucine 265–phenylalanine 285, isoleucine 300–alanine 320, phenylalanine 337–isoleucine 357, leucine 377–isoleucine 397, leucine 427–isoleucine 447, isoleucine 472–proline 492, glycine 522–leucine 542, leucine 591–phenylalanine 611, isoleucine 621–isoleucine 641, leucine 646–phenylalanine 666, leucine 671–tyrosine 691, leucine 707–alanine 727, and methionine 764–isoleucine 784.

This sequence belongs to the CPA3 antiporters (TC 2.A.63) subunit A family. In terms of assembly, may form a heterooligomeric complex that consists of seven subunits: mnhA1, mnhB1, mnhC1, mnhD1, mnhE1, mnhF1 and mnhG1.

It localises to the cell membrane. In terms of biological role, mnh complex is a Na(+)/H(+) antiporter involved in Na(+) excretion. The sequence is that of Na(+)/H(+) antiporter subunit A1 (mnhA1) from Staphylococcus haemolyticus (strain JCSC1435).